The following is a 315-amino-acid chain: Mitochondrial glycine transporter (315 aa).

Solcar repeat units lie at residues 19-102, 125-206, and 221-305; these read SKTT…LRTG, TANL…LKRR, and KSSS…LILR. 6 helical membrane-spanning segments follow: residues 25–50, 77–103, 128–153, 181–204, 225–251, and 280–298; these read FTAG…TRVQ, GTLP…RTGL, LATG…VRYE, GFGA…EQLK, INFV…KTRL, and GLGL…AWTV.

The protein belongs to the mitochondrial carrier (TC 2.A.29) family. SLC25A38 subfamily.

It localises to the mitochondrion inner membrane. It catalyses the reaction glycine(in) = glycine(out). Its function is as follows. Mitochondrial glycine transporter that imports glycine into the mitochondrial matrix. Plays an important role in providing glycine for the first enzymatic step in heme biosynthesis, the condensation of glycine with succinyl-CoA to produce 5-aminolevulinate (ALA) in the mitochondrial matrix. In Aspergillus niger (strain ATCC MYA-4892 / CBS 513.88 / FGSC A1513), this protein is Mitochondrial glycine transporter.